A 527-amino-acid polypeptide reads, in one-letter code: Cytochrome P450 monooygenase 3 (527 aa).

Residues 21–41 (IAVAFAALCGATGLLAFSWWI) traverse the membrane as a helical segment. Residue C473 participates in heme binding.

It belongs to the cytochrome P450 family. It depends on heme as a cofactor.

The protein localises to the membrane. It participates in plant hormone biosynthesis; gibberellin biosynthesis. In terms of biological role, gibberellin 13-hydroxylase; part of the gene cluster that mediates the biosynthesis of gibberellins (GAs), diterpenoids that may provide a selective advantage during infection of the preferred host plant, rice. Gibberellins (GAs) are diterpenoids and are synthesized via the mevalonate pathway. Biosynthesis of the major metabolite GA3 (gibberellic acid) from geranylgeranyl diphosphate (GGPP) requires 13 steps. The GGPP produced by the geranylgeranyl diphosphate synthase GGS2 is converted to ent-kaurene via ent-copalyldiphosphate in a two-step cyclization reaction performed by the bifunctional ent-copalyl diphosphate synthase/ent-kaurene synthase enzyme (CPS/KS). Ent-Kaurene is metabolized to GAs by a series of oxidation reactions catalyzed by cytochrome P450 monooxygenases. Cytochrome P450 monooxygenase P450-4 is an ent-kaurene oxidase that catalyzes the three oxidation steps between ent-kaurene and ent-kaurenoic acid. The highly multifunctional cytochrome P450 monooxygenase P450-1 then catalyzes four steps involving oxidation at two carbon atoms, in the main pathway from ent-kaurenoic acid to GA14 via GA12-aldehyde as well as producing kaurenolides and fujenoic acids as by-products. The cytochrome P450 monooxygenase P450-2 then converts GA14 to GA4 by removal of C-20. GA4 is further converted to GA7 by the GA4 desaturase DES via 1,2-desaturation before cytochrome P450 monooxygenase P450-3, a 13-hydroxylase, hydroxylates GA7 to GA3, the final product of the GA-biosynthetic pathway. The sequence is that of Cytochrome P450 monooygenase 3 from Gibberella fujikuroi (strain CBS 195.34 / IMI 58289 / NRRL A-6831) (Bakanae and foot rot disease fungus).